Here is a 619-residue protein sequence, read N- to C-terminus: Phosphomethylpyrimidine synthase (619 aa).

Residues 93–104 (IKPEDNGLKGPD) show a composition bias toward basic and acidic residues. Residues 93 to 114 (IKPEDNGLKGPDRSGGVTPFPN) are disordered. Substrate is bound by residues N217, M246, Y275, H311, 331–333 (SRG), 372–375 (DGLR), and E411. H415 contributes to the Zn(2+) binding site. Y438 lines the substrate pocket. H479 lines the Zn(2+) pocket. Residues C559, C562, and C567 each coordinate [4Fe-4S] cluster.

Belongs to the ThiC family. In terms of assembly, homodimer. [4Fe-4S] cluster serves as cofactor.

The enzyme catalyses 5-amino-1-(5-phospho-beta-D-ribosyl)imidazole + S-adenosyl-L-methionine = 4-amino-2-methyl-5-(phosphooxymethyl)pyrimidine + CO + 5'-deoxyadenosine + formate + L-methionine + 3 H(+). The protein operates within cofactor biosynthesis; thiamine diphosphate biosynthesis. Functionally, catalyzes the synthesis of the hydroxymethylpyrimidine phosphate (HMP-P) moiety of thiamine from aminoimidazole ribotide (AIR) in a radical S-adenosyl-L-methionine (SAM)-dependent reaction. The chain is Phosphomethylpyrimidine synthase from Rhizorhabdus wittichii (strain DSM 6014 / CCUG 31198 / JCM 15750 / NBRC 105917 / EY 4224 / RW1) (Sphingomonas wittichii).